We begin with the raw amino-acid sequence, 330 residues long: Diacylglycerol acyltransferase/mycolyltransferase Ag85A (330 aa).

Residues 1–42 form the signal peptide; sequence MKFVDRFRGAVAGMLRRLVVEAMGVALLSALIGVVGSAPAEA. Residue 84 to 85 coordinates substrate; the sequence is LR. A fibronectin-binding region spans residues 100–110; that stretch reads FEWYYQSGISV. A disulfide bridge links Cys-129 with Cys-134. The substrate site is built by Ser-168 and Asp-196. Ser-168 (nucleophile) is an active-site residue. Glu-272 is an active-site residue. Residues 274–277, Lys-281, and 304–306 each bind substrate; these read LVRT and HSW. The active site involves His-304.

Belongs to the mycobacterial A85 antigen family. Homodimer.

It localises to the secreted. The protein resides in the cell wall. It is found in the cytoplasm. The catalysed reaction is an acyl-CoA + a 1,2-diacyl-sn-glycerol = a triacyl-sn-glycerol + CoA. The enzyme catalyses 2 alpha,alpha'-trehalose 6-mycolate = alpha,alpha'-trehalose 6,6'-bismycolate + alpha,alpha-trehalose. The antigen 85 proteins (FbpA, FbpB, FbpC) are responsible for the high affinity of mycobacteria for fibronectin, a large adhesive glycoprotein, which facilitates the attachment of M.tuberculosis to murine alveolar macrophages (AMs). They also help to maintain the integrity of the cell wall by catalyzing the transfer of mycolic acids to cell wall arabinogalactan, and through the synthesis of alpha,alpha-trehalose dimycolate (TDM, cord factor). They catalyze the transfer of a mycoloyl residue from one molecule of alpha,alpha-trehalose monomycolate (TMM) to another TMM, leading to the formation of TDM. FbpA mediates triacylglycerol (TAG) formation with long-chain acyl-CoA as the acyl donor and 1,2-dipalmitoyl-sn-glycerol (1,2-dipalmitin) as the acyl acceptor. It has a preference for C26:0-CoA over C18:1-CoA. In Mycobacterium leprae (strain TN), this protein is Diacylglycerol acyltransferase/mycolyltransferase Ag85A (fbpA).